Reading from the N-terminus, the 331-residue chain is Putative type II secretion system C-type protein YghF (331 aa).

A helical membrane pass occupies residues methionine 44 to leucine 60.

This sequence belongs to the GSP C family.

It is found in the cell inner membrane. Involved in a type II secretion system (T2SS, formerly general secretion pathway, GSP) for the export of folded proteins across the outer membrane. In Escherichia coli (strain K12), this protein is Putative type II secretion system C-type protein YghF.